We begin with the raw amino-acid sequence, 147 residues long: Membrane-spanning 4-domains subfamily A member 6E (147 aa).

Residues 1-52 are Cytoplasmic-facing; it reads MTSQPISNETIIMLPSNVINFSQAEKPEPTNQGQDSLKKRLQAKVKVIGVHS. A helical transmembrane segment spans residues 53–73; that stretch reads SLAGSILSALSALVGFILLSV. Residues 74-120 are Extracellular-facing; it reads NPAALNPASLQCKLDEKDIPTRLLLSYDYHSPYTMDCHRAKASLAGT. A helical transmembrane segment spans residues 121-141; sequence LSLMLVSTVLEFCLAVLTAVL. Residues 142 to 147 lie on the Cytoplasmic side of the membrane; it reads QWKQTV.

This sequence belongs to the MS4A family. As to expression, expressed by malignant and fetal tissue at very low levels.

It is found in the membrane. May be involved in signal transduction as a component of a multimeric receptor complex. This is Membrane-spanning 4-domains subfamily A member 6E (MS4A6E) from Homo sapiens (Human).